Reading from the N-terminus, the 174-residue chain is Nucleoside-triphosphatase THEP1 (174 aa).

Residues glycine 7–threonine 14 and leucine 94–glycine 101 each bind ATP.

It belongs to the THEP1 NTPase family.

It carries out the reaction a ribonucleoside 5'-triphosphate + H2O = a ribonucleoside 5'-diphosphate + phosphate + H(+). In terms of biological role, has nucleotide phosphatase activity towards ATP, GTP, CTP, TTP and UTP. May hydrolyze nucleoside diphosphates with lower efficiency. The sequence is that of Nucleoside-triphosphatase THEP1 from Thermotoga sp. (strain RQ2).